The following is a 105-amino-acid chain: NADH-quinone oxidoreductase subunit K (105 aa).

The next 3 membrane-spanning stretches (helical) occupy residues 9-29 (PNYYLVLAAVLFTIGAAGVLV), 34-54 (IVLFMCVELMLNAANLTLVTF), and 65-85 (IMAFFVMVVAAAEVVVGLAII).

It belongs to the complex I subunit 4L family. In terms of assembly, NDH-1 is composed of 14 different subunits. Subunits NuoA, H, J, K, L, M, N constitute the membrane sector of the complex.

The protein resides in the cell membrane. It carries out the reaction a quinone + NADH + 5 H(+)(in) = a quinol + NAD(+) + 4 H(+)(out). Its function is as follows. NDH-1 shuttles electrons from NADH, via FMN and iron-sulfur (Fe-S) centers, to quinones in the respiratory chain. The immediate electron acceptor for the enzyme in this species is believed to be a menaquinone. Couples the redox reaction to proton translocation (for every two electrons transferred, four hydrogen ions are translocated across the cytoplasmic membrane), and thus conserves the redox energy in a proton gradient. In Salinispora tropica (strain ATCC BAA-916 / DSM 44818 / JCM 13857 / NBRC 105044 / CNB-440), this protein is NADH-quinone oxidoreductase subunit K.